The chain runs to 327 residues: o-succinylbenzoate synthase (327 aa).

The active-site Proton donor is the K110. D138, E165, and D188 together coordinate Mg(2+). The active-site Proton acceptor is the K212.

It belongs to the mandelate racemase/muconate lactonizing enzyme family. MenC type 1 subfamily. The cofactor is a divalent metal cation.

The catalysed reaction is (1R,6R)-6-hydroxy-2-succinyl-cyclohexa-2,4-diene-1-carboxylate = 2-succinylbenzoate + H2O. The protein operates within quinol/quinone metabolism; 1,4-dihydroxy-2-naphthoate biosynthesis; 1,4-dihydroxy-2-naphthoate from chorismate: step 4/7. It functions in the pathway quinol/quinone metabolism; menaquinone biosynthesis. Functionally, converts 2-succinyl-6-hydroxy-2,4-cyclohexadiene-1-carboxylate (SHCHC) to 2-succinylbenzoate (OSB). The chain is o-succinylbenzoate synthase from Mycobacterium marinum (strain ATCC BAA-535 / M).